A 342-amino-acid polypeptide reads, in one-letter code: Mitogen-activated protein kinase kinase kinase 20 (342 aa).

The Protein kinase domain occupies 3-268 (WVRGETIGFG…AEMLLNHSFV (266 aa)). 9–17 (IGFGTFSTV) provides a ligand contact to ATP. Ser18 carries the phosphoserine modification. The residue at position 19 (Thr19) is a Phosphothreonine. Lys36 serves as a coordination point for ATP. 2 positions are modified to phosphotyrosine: Tyr41 and Tyr66. A phosphoserine mark is found at Ser93 and Ser114. Catalysis depends on Asp131, which acts as the Proton acceptor. The interval 285-342 (KDEDKVLMSPKCPFEFDDWDSFTLDSNPSFDSPVERLGSLVSGSIPDWSVGGSWLTVR) is required for MKK3 binding.

The protein belongs to the protein kinase superfamily. Ser/Thr protein kinase family. As to quaternary structure, interacts with MKK3 and MPK18 via its C-terminal domain. Binds to MKK5. Autophosphorylates; active in phosphorylated state. Dephosphorylated by ABI1. As to expression, expressed in roots, seedlings, leaves, flower buds, flowers and siliques.

It localises to the nucleus. The protein resides in the cytoplasm. The catalysed reaction is L-seryl-[protein] + ATP = O-phospho-L-seryl-[protein] + ADP + H(+). The enzyme catalyses L-threonyl-[protein] + ATP = O-phospho-L-threonyl-[protein] + ADP + H(+). With respect to regulation, activated through serine, threonine and tyrosine phosphorylation, especially upon abscisic acid (ABA) treatment. Restricted activity by ABI1-mediated dephosphorylation. Mitogen-activated protein kinase kinase (MAPKK) that phosphorylates both MKK3 and MPK18 and regulate two separate signaling pathways involved in root microtubule functions. MAPKK which regulates abscisic acid (ABA) responses in a MAPKKK20-MKK5-MPK6 cascade involved in root growth (e.g. root cell division and elongation) and stomatal response, probably via MKK5 activation by protein phosphorylation and subsequent activation of MAPK6 by MKK5. Involved in various abiotic stresses (e.g. osmotic stress, cold and hydrogen peroxide) responses by phosphorylating and thus regulating MPK6 activity, in an ABA-independent manner. In Arabidopsis thaliana (Mouse-ear cress), this protein is Mitogen-activated protein kinase kinase kinase 20.